A 333-amino-acid chain; its full sequence is Electron transfer flavoprotein subunit alpha, mitochondrial (333 aa).

The N-terminal 19 residues, 1 to 19, are a transit peptide targeting the mitochondrion; it reads MFRAAAPGQLRRAASLLRF. The domain I stretch occupies residues 20-204; the sequence is QSTLVIAEHA…GISEWLDQKL (185 aa). Lysine 59 carries the N6-acetyllysine; alternate modification. Residue lysine 59 is modified to N6-succinyllysine; alternate. The residue at position 62 (lysine 62) is an N6-acetyllysine. Lysine 69 is modified (N6-acetyllysine; alternate). Position 69 is an N6-succinyllysine; alternate (lysine 69). The residue at position 75 (lysine 75) is an N6-acetyllysine. Lysine 85 is subject to N6-acetyllysine; alternate. Lysine 85 is subject to N6-succinyllysine; alternate. At threonine 93 the chain carries Phosphothreonine. N6-acetyllysine is present on residues lysine 101 and lysine 139. Residue serine 140 is modified to Phosphoserine. At lysine 158 the chain carries N6-acetyllysine; alternate. Residue lysine 158 is modified to N6-succinyllysine; alternate. N6-acetyllysine is present on lysine 164. Lysine 187 is modified (N6-succinyllysine). Position 203 is an N6-acetyllysine; alternate (lysine 203). The residue at position 203 (lysine 203) is an N6-succinyllysine; alternate. A domain II region spans residues 205–333; it reads TKSDRPELTG…PEMTEILKKK (129 aa). Lysine 216 is subject to N6-succinyllysine. FAD is bound at residue arginine 223. An N6-acetyllysine; alternate mark is found at lysine 226 and lysine 232. Residues lysine 226 and lysine 232 each carry the N6-succinyllysine; alternate modification. FAD-binding positions include serine 248, 263–266, 281–286, and asparagine 300; these read VGQT and SGAIQH. Lysine 301 is subject to N6-succinyllysine. Residue 318-319 participates in FAD binding; sequence DL.

This sequence belongs to the ETF alpha-subunit/FixB family. Heterodimer composed of ETFA and ETFB. Identified in a complex that contains ETFA, ETFB and ETFRF1. Interaction with ETFRF1 promotes dissociation of the bound FAD and loss of electron transfer activity. Interacts with TASOR. It depends on FAD as a cofactor.

The protein resides in the mitochondrion matrix. Functionally, heterodimeric electron transfer flavoprotein that accepts electrons from several mitochondrial dehydrogenases, including acyl-CoA dehydrogenases, glutaryl-CoA and sarcosine dehydrogenase. It transfers the electrons to the main mitochondrial respiratory chain via ETF-ubiquinone oxidoreductase (ETF dehydrogenase). Required for normal mitochondrial fatty acid oxidation and normal amino acid metabolism. This chain is Electron transfer flavoprotein subunit alpha, mitochondrial (Etfa), found in Rattus norvegicus (Rat).